A 289-amino-acid chain; its full sequence is N-acetylmuramoyl-L-alanine amidase AmiA (289 aa).

The tat-type signal signal peptide spans 1-34; the sequence is MSTFKPLKTLTSRRQVLKAGLAALTLSGMSQAIA. A disordered region spans residues 39–63; sequence LKTSNGHSKPKAKKSGGKRVVVLDP. Over residues 46–55 the composition is skewed to basic residues; it reads SKPKAKKSGG. The MurNAc-LAA domain occupies 59–273; it reads VVLDPGHGGI…IATAIAEGVI (215 aa).

The protein belongs to the N-acetylmuramoyl-L-alanine amidase 3 family. Post-translationally, exported by the Tat system. The position of the signal peptide cleavage has not been experimentally proven. Can also be exported by the Sec system.

It is found in the periplasm. The enzyme catalyses Hydrolyzes the link between N-acetylmuramoyl residues and L-amino acid residues in certain cell-wall glycopeptides.. In terms of biological role, cell-wall hydrolase involved in septum cleavage during cell division. Can also act as powerful autolysin in the presence of murein synthesis inhibitors. This is N-acetylmuramoyl-L-alanine amidase AmiA (amiA) from Escherichia coli (strain K12).